The chain runs to 845 residues: Poly(A) RNA polymerase gld-4 (845 aa).

Residues 1 to 55 (MNEDSRLSSSQQPSTSTPRSSIPSTMNSDEPNTCRRLSQSQEQPSTSRTCKSETP) form a disordered region. A compositionally biased stretch (low complexity) spans 7–25 (LSSSQQPSTSTPRSSIPST). Over residues 26–49 (MNSDEPNTCRRLSQSQEQPSTSRT) the composition is skewed to polar residues. Mg(2+) is bound by residues D139 and D141. The region spanning 276-335 (NLGHLLLRFLELYSLEFNFEEMGISPGQCCYIPKSASGARYGHKQAQPGNLALEDPLLTA) is the PAP-associated domain. Basic and acidic residues predominate over residues 482–506 (KSLEKMPACDDNKKEEELVATRETD). 2 disordered regions span residues 482–733 (KSLE…SEEP) and 788–845 (NALT…RLQR). Over residues 535–551 (TSTQSVNTSATVSTAAS) the composition is skewed to low complexity. 2 stretches are compositionally biased toward polar residues: residues 561–571 (PGLSSSMGNQS) and 579–588 (GINNRNNSAV). Basic and acidic residues predominate over residues 605-620 (RESKRTQTTSEDKMQD). The segment covering 643-653 (SHKHRNAHPQR) has biased composition (basic residues). 4 stretches are compositionally biased toward polar residues: residues 654–666 (QRPSIRNLSQGSD), 695–732 (RQQTNTRNCGPTNNIPYDSFRSQNKNSTLDGSNNSSEE), 788–805 (NALTTSPMTPPSAHTSMQ), and 819–828 (DNNSATSSTD).

Interacts with gls-1 isoform C. Requires Mg(2+) as cofactor. It depends on Mn(2+) as a cofactor. Germline-specific.

The protein resides in the cytoplasm. Its subcellular location is the cytoplasmic granule. The protein localises to the perinuclear region. It carries out the reaction RNA(n) + ATP = RNA(n)-3'-adenine ribonucleotide + diphosphate. Its function is as follows. Cytoplasmic poly(A) RNA polymerase that adds successive AMP monomers to the 3'-end of specific RNAs, forming a poly(A) tail. The enzymatic activity is enhanced by its interaction with gls-1. Required, together with gld-2, for early meiotic progression in male and female germ cells and for gld-1 protein accumulation in the hermaphrodite germline. In the germline, forms a complex with gls-1 which directly binds to gld-1 mRNA and prevents its degradation. This chain is Poly(A) RNA polymerase gld-4, found in Caenorhabditis elegans.